A 173-amino-acid polypeptide reads, in one-letter code: Probable chemoreceptor glutamine deamidase CheD 2 (173 aa).

This sequence belongs to the CheD family.

The enzyme catalyses L-glutaminyl-[protein] + H2O = L-glutamyl-[protein] + NH4(+). Probably deamidates glutamine residues to glutamate on methyl-accepting chemotaxis receptors (MCPs), playing an important role in chemotaxis. This chain is Probable chemoreceptor glutamine deamidase CheD 2, found in Albidiferax ferrireducens (strain ATCC BAA-621 / DSM 15236 / T118) (Rhodoferax ferrireducens).